The sequence spans 116 residues: MDKKTARLRRAKRTRRNYIEQGTTRLVIHRTPRHIYAQVVTAEGTVLAAASTVEKAICETVKGTGNVAAAQAVGKAVAERAADKGIEKIAFDRSGFKYHGRVKALADAAREAGLQF.

Belongs to the universal ribosomal protein uL18 family. Part of the 50S ribosomal subunit; part of the 5S rRNA/L5/L18/L25 subcomplex. Contacts the 5S and 23S rRNAs.

Functionally, this is one of the proteins that bind and probably mediate the attachment of the 5S RNA into the large ribosomal subunit, where it forms part of the central protuberance. The protein is Large ribosomal subunit protein uL18 of Pseudoalteromonas translucida (strain TAC 125).